Consider the following 201-residue polypeptide: Small ribosomal subunit protein uS4c (201 aa).

A disordered region spans residues 17-44 (ALPGLTNKKPRNGSDLRNQSRSGKKSQY). One can recognise an S4 RNA-binding domain in the interval 89–149 (MRLDNILFRL…DEQKSRALIQ (61 aa)).

It belongs to the universal ribosomal protein uS4 family. In terms of assembly, part of the 30S ribosomal subunit. Contacts protein S5. The interaction surface between S4 and S5 is involved in control of translational fidelity.

The protein localises to the plastid. It is found in the chloroplast. Functionally, one of the primary rRNA binding proteins, it binds directly to 16S rRNA where it nucleates assembly of the body of the 30S subunit. Its function is as follows. With S5 and S12 plays an important role in translational accuracy. The polypeptide is Small ribosomal subunit protein uS4c (rps4) (Nicotiana sylvestris (Wood tobacco)).